A 497-amino-acid chain; its full sequence is ADP-dependent glucokinase (497 aa).

The first 22 residues, 1 to 22 (MALWRGSAYAGFLALAVGCVFL), serve as a signal peptide directing secretion. An ADPK domain is found at 52–497 (SPEGRLAAAW…LFYSEVHPHY (446 aa)). The Mg(2+) site is built by E297, E328, and D481. Catalysis depends on D481, which acts as the Proton acceptor.

It belongs to the ADP-dependent glucokinase family. Monomer. Requires Mg(2+) as cofactor.

The protein localises to the secreted. It catalyses the reaction D-glucose + ADP = D-glucose 6-phosphate + AMP + H(+). It functions in the pathway carbohydrate degradation; glycolysis. Its function is as follows. Catalyzes the phosphorylation of D-glucose to D-glucose 6-phosphate using ADP as the phosphate donor. GDP and CDP can replace ADP, but with reduced efficiency. In Homo sapiens (Human), this protein is ADP-dependent glucokinase (ADPGK).